Reading from the N-terminus, the 333-residue chain is GTP 3',8-cyclase (333 aa).

Residues 7–221 (KFGRVHDYIR…FEACDAIGFE (215 aa)) enclose the Radical SAM core domain. Arg-16 is a GTP binding site. [4Fe-4S] cluster contacts are provided by Cys-23 and Cys-27. Position 29 (Tyr-29) interacts with S-adenosyl-L-methionine. Residue Cys-30 coordinates [4Fe-4S] cluster. Arg-66 contacts GTP. Position 70 (Gly-70) interacts with S-adenosyl-L-methionine. Residue Thr-97 participates in GTP binding. Residue Ser-121 coordinates S-adenosyl-L-methionine. Lys-158 contacts GTP. Met-192 provides a ligand contact to S-adenosyl-L-methionine. Cys-257 and Cys-260 together coordinate [4Fe-4S] cluster. Residue 262–264 (RLR) coordinates GTP. A [4Fe-4S] cluster-binding site is contributed by Cys-274.

It belongs to the radical SAM superfamily. MoaA family. Monomer and homodimer. The cofactor is [4Fe-4S] cluster.

It carries out the reaction GTP + AH2 + S-adenosyl-L-methionine = (8S)-3',8-cyclo-7,8-dihydroguanosine 5'-triphosphate + 5'-deoxyadenosine + L-methionine + A + H(+). The protein operates within cofactor biosynthesis; molybdopterin biosynthesis. In terms of biological role, catalyzes the cyclization of GTP to (8S)-3',8-cyclo-7,8-dihydroguanosine 5'-triphosphate. The protein is GTP 3',8-cyclase of Listeria welshimeri serovar 6b (strain ATCC 35897 / DSM 20650 / CCUG 15529 / CIP 8149 / NCTC 11857 / SLCC 5334 / V8).